The primary structure comprises 693 residues: Elongation factor G (693 aa).

Residues 7–282 form the tr-type G domain; that stretch reads EKIRNIGITA…SVIDYLPAPT (276 aa). GTP is bound by residues 16–23, 80–84, and 134–137; these read AHIDAGKT, DTPGH, and NKLD.

Belongs to the TRAFAC class translation factor GTPase superfamily. Classic translation factor GTPase family. EF-G/EF-2 subfamily.

Its subcellular location is the cytoplasm. Its function is as follows. Catalyzes the GTP-dependent ribosomal translocation step during translation elongation. During this step, the ribosome changes from the pre-translocational (PRE) to the post-translocational (POST) state as the newly formed A-site-bound peptidyl-tRNA and P-site-bound deacylated tRNA move to the P and E sites, respectively. Catalyzes the coordinated movement of the two tRNA molecules, the mRNA and conformational changes in the ribosome. This is Elongation factor G from Granulibacter bethesdensis (strain ATCC BAA-1260 / CGDNIH1).